Here is a 100-residue protein sequence, read N- to C-terminus: uncharacterized protein (100 aa).

The first 23 residues, 1–23 (MKYVALAFVLSLVILQISAQVGA), serve as a signal peptide directing secretion.

As to expression, nacreous layer of shell (at protein level). Expressed primarily in the mantle with highest level in the mantle pallium and lower level in the mantle edge.

The protein localises to the secreted. This is an uncharacterized protein from Margaritifera margaritifera (Freshwater pearl mussel).